Reading from the N-terminus, the 1114-residue chain is MMDRSNAAFVLTACFIFSQLICHVAAITRTYYIAAVEKEWDYAPSGYNKIKGVKLEDDSDATVFATKGAHRIGRIYDKVLYREYEDASFTKEKPHPKYLGFLGPILKGEIGDTIVVHFKNNGSRVYSMHPHGVFYSKDSEGALYEDNTKGKFKKDDKVPPGGTHTYSWHLTQSHAPADQEDKCITWIYHSHVVPSKDINTGLLGIMLICRKGALNQGQQSGVDKEFVALFTVLDENESWLLSKNIERCSDPTRVNPDDEDFKESNKMHAINGYFYGNLPGLDMCYGDSVKWHLAGIGNEVDIHTAYFHGQSFTIDGHRKDVASLLPATFVTASMKALNPGKWMLNCLVNDHYNAGMYTLFNVTKCPGKVGVAPSVSGGKKRTYFIAANEVEWNYGPTGVNGMDGQSLIAPGSDSAVFFAQNAQRIGGTYLKAIYEQYTDARFSTKVPKPEHLGFLGPVIRAEVNDIIEVVFKNNARFNFSIQPHGVFFNKSNEGALYEDGTSRAQKADDNVQPGQTFTYRWTVPEEVGPTKSDAACITWVYHSSVDPVKDTYSGLFGPLLTCKKGTLNNDNTRKDTDKEFVLLFTVTDESESWYHEKNKEMKANAILINDDDEDYKESNKMHGINGFLYANLPGLEMCLGDTISWHVIGLGNEVDMHTAYFYGNTFTHQGSVKDTVSLLPGVFGTLTMTPDNAGDWALVCRTNDHYSAGMQAKYKVNTCNRNPELKTSGKTRDYYIAAFEMEWDYAPTGLDALDGKKLDQSEEAKVFTVTSDKRIGRKYVKAVYREFTNDQFNQQKLRTPAEEHLGILGPMLHAEVGDTIKVVFKNNANRNYSVHPHGLYYSKAHEGSDYNDGTSGADKLDNAIQPGKTYTYIWKVPERAGPGKDGPACATWAYYSDVNPIKDTNSGLIGPLIICKKGKLKEGTEERSDVDREFVLMFTVLDENESWYLDENIKKYCKNPGDKETLKADDDFMESNKMHGINGFVFGNLKGLKMYQDEKVDWLLLGIGNEVDMHTVHFHGQSFLRKQVSYHREDVYDLFPGVFATVEMVPDSTGDWLLHCHVNDHMVAGMETLYSVLDKSLKTTPKPITAASSFVTSSIFIYLSFPVLAMLLKA.

A signal peptide spans 1-26 (MMDRSNAAFVLTACFIFSQLICHVAA). Plastocyanin-like domains are found at residues 27 to 210 (ITRT…LICR), 218 to 365 (QQSG…VTKC), 380 to 562 (KRTY…LLTC), 572 to 719 (TRKD…VNTC), 730 to 915 (KTRD…LIIC), and 924 to 1114 (TEER…LLKA). Topologically, residues 27 to 1091 (ITRTYYIAAV…KTTPKPITAA (1065 aa)) are extracellular. A glycan (N-linked (GlcNAc...) asparagine) is linked at asparagine 121. Cu cation is bound by residues histidine 129, histidine 131, histidine 189, and histidine 191. Cysteine 183 and cysteine 209 form a disulfide bridge. N-linked (GlcNAc...) asparagine glycosylation is present at asparagine 236. Cysteine 284 and cysteine 365 are joined by a disulfide. Cu cation-binding residues include histidine 303, cysteine 346, and histidine 351. Asparagine 361, asparagine 478, and asparagine 489 each carry an N-linked (GlcNAc...) asparagine glycan. 2 cysteine pairs are disulfide-bonded: cysteine 536–cysteine 562 and cysteine 638–cysteine 719. Cu cation contacts are provided by histidine 657, cysteine 700, histidine 705, and methionine 710. A glycan (N-linked (GlcNAc...) asparagine) is linked at asparagine 831. The cysteines at positions 889 and 915 are disulfide-linked. The N-linked (GlcNAc...) asparagine glycan is linked to asparagine 944. 8 residues coordinate Cu cation: histidine 1014, histidine 1017, histidine 1019, histidine 1059, cysteine 1060, histidine 1061, histidine 1065, and methionine 1070. The helical transmembrane segment at 1092 to 1112 (SSFVTSSIFIYLSFPVLAMLL) threads the bilayer. Residues 1113–1114 (KA) are Cytoplasmic-facing.

Belongs to the multicopper oxidase family. It depends on Cu cation as a cofactor. Component of the acid-insoluble and acid-soluble organic matrix of the aragonitic skeleton (at protein level).

The protein resides in the membrane. In terms of biological role, may function as a ferroxidase and may be involved in copper transport and homeostasis. In Acropora millepora (Staghorn coral), this protein is Hephaestin-like protein.